Consider the following 254-residue polypeptide: Sec-independent protein translocase protein TatCy (254 aa).

6 helical membrane-spanning segments follow: residues 24-44 (IVAL…KPII), 67-87 (LYVF…PVIL), 112-132 (VSIL…FPFV), 157-177 (FLLQ…ILMF), 187-207 (MFLA…AALI), and 212-232 (LLSH…SILI).

It belongs to the TatC family. Forms a complex with TatAy. Two types of complexes exist: one composed of TatAy and TatCy, and another composed only of TatAy.

The protein localises to the cell membrane. Functionally, part of the twin-arginine translocation (Tat) system that transports large folded proteins containing a characteristic twin-arginine motif in their signal peptide across membranes. Required for YwbN secretion. The polypeptide is Sec-independent protein translocase protein TatCy (Bacillus subtilis (strain 168)).